The chain runs to 254 residues: MSVAVRVIPCLDVDAGRVVKGVNFTDLRDAGDPVEMARLYDAEGADELTFLDITASSGDRETTYDIVRRTAEQVFIPLTVGGGVRSVDDVNRLLRAGADKVGINTAAVARPELVRECAHRFGNQCIVISVDARRPPGPDGPRFEVTTHGGRKGTGIDAVAWTARVVELGAGEILLNSMDADGTRDGYDLEMICAVRAEVDVPVIASGGAGDLAHFAPAIDAGADAVLAASVFHFGQLRIGEVKTALRGAGVPVR.

Residues aspartate 12 and aspartate 131 contribute to the active site.

This sequence belongs to the HisA/HisF family. As to quaternary structure, heterodimer of HisH and HisF.

The protein resides in the cytoplasm. It catalyses the reaction 5-[(5-phospho-1-deoxy-D-ribulos-1-ylimino)methylamino]-1-(5-phospho-beta-D-ribosyl)imidazole-4-carboxamide + L-glutamine = D-erythro-1-(imidazol-4-yl)glycerol 3-phosphate + 5-amino-1-(5-phospho-beta-D-ribosyl)imidazole-4-carboxamide + L-glutamate + H(+). Its pathway is amino-acid biosynthesis; L-histidine biosynthesis; L-histidine from 5-phospho-alpha-D-ribose 1-diphosphate: step 5/9. Functionally, IGPS catalyzes the conversion of PRFAR and glutamine to IGP, AICAR and glutamate. The HisF subunit catalyzes the cyclization activity that produces IGP and AICAR from PRFAR using the ammonia provided by the HisH subunit. This chain is Imidazole glycerol phosphate synthase subunit HisF, found in Frankia casuarinae (strain DSM 45818 / CECT 9043 / HFP020203 / CcI3).